The chain runs to 808 residues: Bifunctional uridylyltransferase/uridylyl-removing enzyme (808 aa).

A uridylyltransferase region spans residues 1–315 (MEAESPCAAS…ALVRRPKRRP (315 aa)). The tract at residues 316–609 (LDEGVVEYAG…EISPRDGERI (294 aa)) is uridylyl-removing. The HD domain maps to 430 to 544 (VDRHVVETAV…LEVLHALSEA (115 aa)). 2 ACT domains span residues 610–686 (DAVI…GMLQ) and 730–805 (ILEV…VDEP).

Belongs to the GlnD family. Mg(2+) serves as cofactor.

The enzyme catalyses [protein-PII]-L-tyrosine + UTP = [protein-PII]-uridylyl-L-tyrosine + diphosphate. It carries out the reaction [protein-PII]-uridylyl-L-tyrosine + H2O = [protein-PII]-L-tyrosine + UMP + H(+). In terms of biological role, modifies, by uridylylation and deuridylylation, the PII regulatory protein (GlnB), in response to the nitrogen status of the cell that GlnD senses through the glutamine level. Under low glutamine levels, catalyzes the conversion of the PII protein and UTP to PII-UMP and PPi, while under higher glutamine levels, GlnD hydrolyzes PII-UMP to PII and UMP (deuridylylation). Thus, controls uridylylation state and activity of the PII protein, and plays an important role in the regulation of nitrogen assimilation and metabolism. The polypeptide is Bifunctional uridylyltransferase/uridylyl-removing enzyme (Mycobacterium tuberculosis (strain CDC 1551 / Oshkosh)).